Reading from the N-terminus, the 297-residue chain is Phosphoribosylaminoimidazole-succinocarboxamide synthase (297 aa).

This sequence belongs to the SAICAR synthetase family.

The catalysed reaction is 5-amino-1-(5-phospho-D-ribosyl)imidazole-4-carboxylate + L-aspartate + ATP = (2S)-2-[5-amino-1-(5-phospho-beta-D-ribosyl)imidazole-4-carboxamido]succinate + ADP + phosphate + 2 H(+). It functions in the pathway purine metabolism; IMP biosynthesis via de novo pathway; 5-amino-1-(5-phospho-D-ribosyl)imidazole-4-carboxamide from 5-amino-1-(5-phospho-D-ribosyl)imidazole-4-carboxylate: step 1/2. In Mycobacteroides abscessus (strain ATCC 19977 / DSM 44196 / CCUG 20993 / CIP 104536 / JCM 13569 / NCTC 13031 / TMC 1543 / L948) (Mycobacterium abscessus), this protein is Phosphoribosylaminoimidazole-succinocarboxamide synthase.